The following is a 67-amino-acid chain: Large ribosomal subunit protein bL32 (67 aa).

The span at 1-19 shows a compositional bias: basic residues; the sequence is MAVPKRKMSRANTRMRRSQ. The segment at 1-22 is disordered; that stretch reads MAVPKRKMSRANTRMRRSQWKA.

It belongs to the bacterial ribosomal protein bL32 family.

The sequence is that of Large ribosomal subunit protein bL32 from Kocuria rhizophila (strain ATCC 9341 / DSM 348 / NBRC 103217 / DC2201).